Consider the following 143-residue polypeptide: Large ribosomal subunit protein uL11 (143 aa).

Belongs to the universal ribosomal protein uL11 family. In terms of assembly, part of the ribosomal stalk of the 50S ribosomal subunit. Interacts with L10 and the large rRNA to form the base of the stalk. L10 forms an elongated spine to which L12 dimers bind in a sequential fashion forming a multimeric L10(L12)X complex. Post-translationally, one or more lysine residues are methylated.

Its function is as follows. Forms part of the ribosomal stalk which helps the ribosome interact with GTP-bound translation factors. The protein is Large ribosomal subunit protein uL11 of Herminiimonas arsenicoxydans.